The primary structure comprises 429 residues: Formate-dependent phosphoribosylglycinamide formyltransferase (429 aa).

Residues Glu-26 to Leu-27 and Glu-86 contribute to the N(1)-(5-phospho-beta-D-ribosyl)glycinamide site. ATP-binding positions include Arg-118, Lys-159, Glu-199–Ile-202, and Glu-207. The ATP-grasp domain maps to Glu-123–Leu-319. 2 residues coordinate Mg(2+): Glu-276 and Glu-288. N(1)-(5-phospho-beta-D-ribosyl)glycinamide is bound by residues Asp-295, Lys-375, and Arg-382–Arg-383.

This sequence belongs to the PurK/PurT family. Homodimer.

It catalyses the reaction N(1)-(5-phospho-beta-D-ribosyl)glycinamide + formate + ATP = N(2)-formyl-N(1)-(5-phospho-beta-D-ribosyl)glycinamide + ADP + phosphate + H(+). It participates in purine metabolism; IMP biosynthesis via de novo pathway; N(2)-formyl-N(1)-(5-phospho-D-ribosyl)glycinamide from N(1)-(5-phospho-D-ribosyl)glycinamide (formate route): step 1/1. Its function is as follows. Involved in the de novo purine biosynthesis. Catalyzes the transfer of formate to 5-phospho-ribosyl-glycinamide (GAR), producing 5-phospho-ribosyl-N-formylglycinamide (FGAR). Formate is provided by PurU via hydrolysis of 10-formyl-tetrahydrofolate. The chain is Formate-dependent phosphoribosylglycinamide formyltransferase from Thermococcus kodakarensis (strain ATCC BAA-918 / JCM 12380 / KOD1) (Pyrococcus kodakaraensis (strain KOD1)).